We begin with the raw amino-acid sequence, 468 residues long: MTDRPRLRLHDTAAGAVRDFVPLRDGHVSIYLCGATVQGLPHIGHVRSGVAFDILRRWLIALGYDVAFIRNVTDIDDKILNKAAAAGRPWWEWAATYERAFSAAYDALDVLPPSAEPRATGHITQMVELIERLIEKGHAYTGDGDVYFDVLSYPEYGQLSGHRIDDVHQGEGVASGKRDQRDFTLWKGAKPGEPSWPTPWGRGRPGWHTECVAMAHEYLGPEFDIHCGGMDLVFPHHENEIAQSRAAGDGFARYWLHNGWVTMGGEKMSKSLGNVLAIPAMLQRVRPAELRYYLGSAHYRSMLEFSDTALQDAVKAYVGVEEFLHRVRVRVGAVEPGEPTPRFADALNDDLAVPAALAEVHQARAEGNRALDSGDHEGALRQARSIRAMMGILGCDPLHERWETRDESSAALAAVDVLVRAELQNREKAREQRNWALADEIRNRLKQAGIEVTDTADGPQWTLGGDGK.

Cys33 serves as a coordination point for Zn(2+). A 'HIGH' region motif is present at residues 35-45; sequence ATVQGLPHIGH. Zn(2+) is bound by residues Cys211, His236, and Glu240. The short motif at 267 to 271 is the 'KMSKS' region element; sequence KMSKS. Lys270 serves as a coordination point for ATP.

This sequence belongs to the class-I aminoacyl-tRNA synthetase family. In terms of assembly, monomer. The cofactor is Zn(2+).

The protein localises to the cytoplasm. The enzyme catalyses tRNA(Cys) + L-cysteine + ATP = L-cysteinyl-tRNA(Cys) + AMP + diphosphate. The polypeptide is Cysteine--tRNA ligase (Mycobacterium avium (strain 104)).